The primary structure comprises 464 residues: tRNA modification GTPase MnmE (464 aa).

Arg27, Glu90, and Lys129 together coordinate (6S)-5-formyl-5,6,7,8-tetrahydrofolate. Positions 222 to 384 (GIALVLAGSV…LYDKIRSLTC (163 aa)) constitute a TrmE-type G domain. GTP is bound by residues 232–237 (NVGKSS), 251–257 (SSYAGTT), and 276–279 (DTAG). Mg(2+)-binding residues include Ser236 and Thr257. Residue Lys464 coordinates (6S)-5-formyl-5,6,7,8-tetrahydrofolate.

Belongs to the TRAFAC class TrmE-Era-EngA-EngB-Septin-like GTPase superfamily. TrmE GTPase family. In terms of assembly, homodimer. Heterotetramer of two MnmE and two MnmG subunits. K(+) serves as cofactor.

It is found in the cytoplasm. Functionally, exhibits a very high intrinsic GTPase hydrolysis rate. Involved in the addition of a carboxymethylaminomethyl (cmnm) group at the wobble position (U34) of certain tRNAs, forming tRNA-cmnm(5)s(2)U34. This chain is tRNA modification GTPase MnmE, found in Borrelia turicatae (strain 91E135).